Consider the following 694-residue polypeptide: MTDLSRYRNIGIFAHVDAGKTTTTERILKLTGKIHKIGEVHDGAATTDFMEQEQERGITIQSAATTCFWKDHRFNIIDTPGHVDFTIEVYRSLKVLDGGIGVFCGSGGVEPQSETNWRYANDSEVARIIYVNKLDRVGADFYRVVKQIRDVLGAYPLVMTLPIGREESFIGVVELLTRKAWIWDDSGDPMKYEVKDVPAEMADEVEKWRAELVEKAVEQDDEVMEKYLEGEEPDVDTLKRLIRKGTIKLDFFPTYCGSSFKNKGVQLVLDAVVDYLPDPTEVKPQPEVDLEGHETGEFAIVDPDRPLRALAFKIMDDRYGALTFLRLYSGRLEKGTTVLNTATGKTERIGRIVEMHANQRNELDSAQAGDIVAVLGMKNVQTGHTLCDPDKPATLEPMVFPDPVISIAVTPKDKAANEKMGIALGKMVQEDPSFHVETDQESGETILKGMGELHLDIKVDILKRTHGVEVNVGKPQVAYRETITRRVEDEYVHKKQTGGSGQYAKINYVIEPGEPGSGFVFESTVTGGNVPREFWPAVEKGFRSMLGKGVLAGYPCVDFKVNLTDGGFHAVDSSAIAFEIAAQAAFRQSVPKAAPQLLEPIMKVDVFTPDAHVGDVIGDLNRRRGMIKSQEAGVTGVRIKAEVPLSEMFGYIGDLRTMTSGRGQFSMEFSHYMPCPKNVADEVIKEAQERAARK.

One can recognise a tr-type G domain in the interval 5–280; it reads SRYRNIGIFA…AVVDYLPDPT (276 aa). Residues 14-21, 78-82, and 132-135 each bind GTP; these read AHVDAGKT, DTPGH, and NKLD.

It belongs to the TRAFAC class translation factor GTPase superfamily. Classic translation factor GTPase family. EF-G/EF-2 subfamily.

The protein resides in the cytoplasm. Its function is as follows. Catalyzes the GTP-dependent ribosomal translocation step during translation elongation. During this step, the ribosome changes from the pre-translocational (PRE) to the post-translocational (POST) state as the newly formed A-site-bound peptidyl-tRNA and P-site-bound deacylated tRNA move to the P and E sites, respectively. Catalyzes the coordinated movement of the two tRNA molecules, the mRNA and conformational changes in the ribosome. The protein is Elongation factor G 1 of Methylococcus capsulatus (strain ATCC 33009 / NCIMB 11132 / Bath).